A 292-amino-acid polypeptide reads, in one-letter code: Oxidative stress-responsive serine-rich protein 1 (292 aa).

The tract at residues 24-178 (ASGSVASLSV…ATQVPQASLK (155 aa)) is disordered. Residues 65–83 (STRKSSRGAVRTQRRRRSK) show a composition bias toward basic residues. Phosphothreonine is present on residues Thr-143 and Thr-233.

The protein is Oxidative stress-responsive serine-rich protein 1 (OSER1) of Homo sapiens (Human).